We begin with the raw amino-acid sequence, 795 residues long: Protein espinas (795 aa).

The segment at Gly30–Cys96 is disordered. Low complexity predominate over residues Ala52 to Asn66. The PET domain occupies Leu135–Pro243. 3 consecutive LIM zinc-binding domains span residues Arg242–Lys306, Pro307–Glu367, and Tyr368–Pro430. Disordered stretches follow at residues Gly427 to Gly487 and Asn616 to Ile684. 2 stretches are compositionally biased toward basic and acidic residues: residues Arg459–Arg471 and Leu637–Ser649. Positions Val650 to Asp662 are enriched in polar residues. Residues Ala666–Gln675 are compositionally biased toward basic residues.

It belongs to the prickle / espinas / testin family.

The polypeptide is Protein espinas (Drosophila pseudoobscura pseudoobscura (Fruit fly)).